A 236-amino-acid chain; its full sequence is Thiamine-phosphate synthase (236 aa).

Residues 57–61 and Asn89 each bind 4-amino-2-methyl-5-(diphosphooxymethyl)pyrimidine; that span reads QLRDK. The Mg(2+) site is built by Asp90 and Asp109. 4-amino-2-methyl-5-(diphosphooxymethyl)pyrimidine is bound at residue Ser128. 154-156 serves as a coordination point for 2-[(2R,5Z)-2-carboxy-4-methylthiazol-5(2H)-ylidene]ethyl phosphate; that stretch reads TPS. Lys157 lines the 4-amino-2-methyl-5-(diphosphooxymethyl)pyrimidine pocket. 2-[(2R,5Z)-2-carboxy-4-methylthiazol-5(2H)-ylidene]ethyl phosphate contacts are provided by residues Gly185 and 205-206; that span reads IS.

This sequence belongs to the thiamine-phosphate synthase family. Requires Mg(2+) as cofactor.

It catalyses the reaction 2-[(2R,5Z)-2-carboxy-4-methylthiazol-5(2H)-ylidene]ethyl phosphate + 4-amino-2-methyl-5-(diphosphooxymethyl)pyrimidine + 2 H(+) = thiamine phosphate + CO2 + diphosphate. It carries out the reaction 2-(2-carboxy-4-methylthiazol-5-yl)ethyl phosphate + 4-amino-2-methyl-5-(diphosphooxymethyl)pyrimidine + 2 H(+) = thiamine phosphate + CO2 + diphosphate. The catalysed reaction is 4-methyl-5-(2-phosphooxyethyl)-thiazole + 4-amino-2-methyl-5-(diphosphooxymethyl)pyrimidine + H(+) = thiamine phosphate + diphosphate. The protein operates within cofactor biosynthesis; thiamine diphosphate biosynthesis; thiamine phosphate from 4-amino-2-methyl-5-diphosphomethylpyrimidine and 4-methyl-5-(2-phosphoethyl)-thiazole: step 1/1. Functionally, condenses 4-methyl-5-(beta-hydroxyethyl)thiazole monophosphate (THZ-P) and 2-methyl-4-amino-5-hydroxymethyl pyrimidine pyrophosphate (HMP-PP) to form thiamine monophosphate (TMP). The chain is Thiamine-phosphate synthase from Roseiflexus sp. (strain RS-1).